The chain runs to 1214 residues: SWI/SNF complex subunit SMARCC2 (1214 aa).

Residues 1-274 (MAVRKKDGGP…PVSRRKKISA (274 aa)) form a marR-like, BRCT and chromo domains module region. A MarR-like domain is found at 10-136 (PNVKYYEAAD…IEKSLVQNNC (127 aa)). A BRCT; N-terminus domain is found at 140 to 183 (PNIFLCPEIEPKLLGKLKDIIKRHQGTVTEDKNNASHVVYPVPG). The region spanning 189-217 (EWVRPVMKRDKQVLLHWGYYPDSYDTWIP) is the Chromo domain. Residues 233 to 257 (KPRKVHAKWILDTDTFNEWMNEEDY) enclose the BRCT; C-terminus domain. The segment at 257–413 (YEVNDDKNPV…GEQTKNPDLH (157 aa)) is disordered. Positions 275–284 (KTLTDEVNSP) are enriched in polar residues. S283, S286, S302, S304, and S306 each carry phosphoserine. Residue K312 is modified to N6-(ADP-ribosyl)lysine. K326 is subject to N6-acetyllysine. Over residues 331-344 (HREEEQEDLTKDMD) the composition is skewed to basic and acidic residues. Phosphoserine is present on residues S347 and S387. Positions 379 to 398 (DLDEQEDESMETTGKDEDEN) are enriched in acidic residues. The 98-residue stretch at 424 to 521 (IIIPSYAAWF…YQVDAESRPT (98 aa)) folds into the SWIRM domain. Residue T548 is modified to Phosphothreonine. Glycyl lysine isopeptide (Lys-Gly) (interchain with G-Cter in SUMO2) cross-links involve residues K564, K566, K568, and K592. Residues 596-647 (SATREWTEQETLLLLEALEMYKDDWNKVSEHVGSRTQDECILHFLRLPIEDP) form the SANT domain. K704 is covalently cross-linked (Glycyl lysine isopeptide (Lys-Gly) (interchain with G-Cter in SUMO2)). Positions 724–852 (KVTGKADPAF…GERKTKVERD (129 aa)) are disordered. Composition is skewed to basic and acidic residues over residues 747-777 (EPERIEESGNDEARVEGQATDEKKEPKEPRE) and 784-852 (EEAK…VERD). Residue K787 forms a Glycyl lysine isopeptide (Lys-Gly) (interchain with G-Cter in SUMO2) linkage. S813 is subject to Phosphoserine. K848 is covalently cross-linked (Glycyl lysine isopeptide (Lys-Gly) (interchain with G-Cter in SUMO2)). Residues 907 to 934 (EELETIMDREREALEYQRQQLLADRQAF) adopt a coiled-coil conformation. 3 disordered regions span residues 947 to 983 (RQQHFQQMHQQQQQPPPALPPGSQPIPPTGAAGPPAV), 997 to 1092 (PAGS…PPPP), and 1182 to 1214 (LPSASPLPDPGTPLPPDPTAPSPGTVTPVPPPQ). A compositionally biased stretch (low complexity) spans 949-959 (QHFQQMHQQQQ). The span at 960–974 (QPPPALPPGSQPIPP) shows a compositional bias: pro residues. Low complexity predominate over residues 997-1033 (PAGSGAPPGSLGPSEQIGQAGSTAGPQQQQPAGAPQP). 2 stretches are compositionally biased toward pro residues: residues 1034–1051 (GAVPPGVPPPGPHGPSPF) and 1186–1202 (SPLPDPGTPLPPDPTAP).

The protein belongs to the SMARCC family. As to quaternary structure, component of the multiprotein chromatin-remodeling complexes SWI/SNF: SWI/SNF-A (BAF), SWI/SNF-B (PBAF) and related complexes. The canonical complex contains a catalytic subunit (either SMARCA4/BRG1/BAF190A or SMARCA2/BRM/BAF190B) and at least SMARCE1, ACTL6A/BAF53, SMARCC1/BAF155, SMARCC2/BAF170, and SMARCB1/SNF5/BAF47. Other subunits specific to each of the complexes may also be present permitting several possible combinations developmentally and tissue specific. Component of the BAF complex, which includes at least actin (ACTB), ARID1A/BAF250A, ARID1B/BAF250B, SMARCA2/BRM, SMARCA4/BRG1, ACTL6A/BAF53, ACTL6B/BAF53B, SMARCE1/BAF57, SMARCC1/BAF155, SMARCC2/BAF170, SMARCB1/SNF5/INI1, and one or more SMARCD1/BAF60A, SMARCD2/BAF60B, or SMARCD3/BAF60C. In muscle cells, the BAF complex also contains DPF3. Component of neural progenitors-specific chromatin remodeling complex (npBAF complex) composed of at least, ARID1A/BAF250A or ARID1B/BAF250B, SMARCD1/BAF60A, SMARCD3/BAF60C, SMARCA2/BRM/BAF190B, SMARCA4/BRG1/BAF190A, SMARCB1/BAF47, SMARCC1/BAF155, SMARCE1/BAF57, SMARCC2/BAF170, PHF10/BAF45A, ACTL6A/BAF53A and actin. Component of neuron-specific chromatin remodeling complex (nBAF complex) composed of at least, ARID1A/BAF250A or ARID1B/BAF250B, SMARCD1/BAF60A, SMARCD3/BAF60C, SMARCA2/BRM/BAF190B, SMARCA4/BRG1/BAF190A, SMARCB1/BAF47, SMARCC1/BAF155, SMARCE1/BAF57, SMARCC2/BAF170, DPF1/BAF45B, DPF3/BAF45C, ACTL6B/BAF53B and actin. Component of the SWI/SNF-B (PBAF) chromatin remodeling complex, at least composed of SMARCA4/BRG1, SMARCB1/BAF47/SNF5, ACTL6A/BAF53A or ACTL6B/BAF53B, SMARCE1/BAF57, SMARCD1/BAF60A, SMARCD2/BAF60B, perhaps SMARCD3/BAF60C, SMARCC1/BAF155, SMARCC2/BAF170, PBRM1/BAF180, ARID2/BAF200 and actin. May also interact with the SIN3A histone deacetylase transcription repressor complex in conjunction with SMARCA2 and SMARCA4. Interacts with SMARD1. Interacts with KDM6B. Interaction with RCOR1. Interacts with DPF2. Interacts with ERCC6. Interacts with FOS. Mono-ADP-ribosylation at Lys-312 by SIRT6 promotes recruitment to the enhancer region of the Heme oxygenase-1 (HO-1) locus, leading to transcription activation of the locus. As to expression, ubiquitously expressed.

The protein localises to the nucleus. In terms of biological role, involved in transcriptional activation and repression of select genes by chromatin remodeling (alteration of DNA-nucleosome topology). Component of SWI/SNF chromatin remodeling complexes that carry out key enzymatic activities, changing chromatin structure by altering DNA-histone contacts within a nucleosome in an ATP-dependent manner. Can stimulate the ATPase activity of the catalytic subunit of these complexes. May be required for CoREST dependent repression of neuronal specific gene promoters in non-neuronal cells. Belongs to the neural progenitors-specific chromatin remodeling complex (npBAF complex) and the neuron-specific chromatin remodeling complex (nBAF complex). During neural development a switch from a stem/progenitor to a postmitotic chromatin remodeling mechanism occurs as neurons exit the cell cycle and become committed to their adult state. The transition from proliferating neural stem/progenitor cells to postmitotic neurons requires a switch in subunit composition of the npBAF and nBAF complexes. As neural progenitors exit mitosis and differentiate into neurons, npBAF complexes which contain ACTL6A/BAF53A and PHF10/BAF45A, are exchanged for homologous alternative ACTL6B/BAF53B and DPF1/BAF45B or DPF3/BAF45C subunits in neuron-specific complexes (nBAF). The npBAF complex is essential for the self-renewal/proliferative capacity of the multipotent neural stem cells. The nBAF complex along with CREST plays a role regulating the activity of genes essential for dendrite growth. Critical regulator of myeloid differentiation, controlling granulocytopoiesis and the expression of genes involved in neutrophil granule formation. The protein is SWI/SNF complex subunit SMARCC2 (SMARCC2) of Homo sapiens (Human).